The sequence spans 412 residues: Argininosuccinate synthase (412 aa).

Residues 10–18 and Ala36 each bind ATP; that span reads AYSGGLDTS. Residues Tyr87 and Ser92 each coordinate L-citrulline. Tyr87 bears the Phosphotyrosine mark. Lys112 is modified (N6-acetyllysine). At Tyr113 the chain carries Phosphotyrosine. 115 to 123 provides a ligand contact to ATP; the sequence is SHGATGKGN. 3 residues coordinate L-aspartate: Thr119, Asn123, and Asp124. Asn123 provides a ligand contact to L-citrulline. Arg127 is an L-citrulline binding site. Lys165 and Lys176 each carry N6-acetyllysine; by CLOCK. 2 residues coordinate L-citrulline: Ser180 and Ser189. Phosphoserine is present on Ser180. Ser219 is modified (phosphoserine). Residues Glu270 and Tyr282 each contribute to the L-citrulline site.

Belongs to the argininosuccinate synthase family. Type 1 subfamily. As to quaternary structure, homotetramer. Interacts with NMRAL1. Interacts with CLOCK; in a circadian manner. Forms tissue-specific complexes with ASL, SLC7A1, HSP90AA1 and nitric oxide synthase NOS1, NOS2 or NOS3; the complex regulates cell-autonomous L-arginine synthesis and citrulline recycling while channeling extracellular L-arginine to nitric oxide synthesis pathway. In terms of processing, acetylated by CLOCK in a circadian manner which negatively regulates its enzyme activity. Deacetylated by histone deacetylases.

The protein localises to the cytoplasm. Its subcellular location is the cytosol. The enzyme catalyses L-citrulline + L-aspartate + ATP = 2-(N(omega)-L-arginino)succinate + AMP + diphosphate + H(+). Its pathway is amino-acid biosynthesis; L-arginine biosynthesis; L-arginine from L-ornithine and carbamoyl phosphate: step 2/3. It participates in nitrogen metabolism; urea cycle; (N(omega)-L-arginino)succinate from L-aspartate and L-citrulline: step 1/1. Its function is as follows. One of the enzymes of the urea cycle, the metabolic pathway transforming neurotoxic amonia produced by protein catabolism into inocuous urea in the liver of ureotelic animals. Catalyzes the formation of arginosuccinate from aspartate, citrulline and ATP and together with ASL it is responsible for the biosynthesis of arginine in most body tissues. This is Argininosuccinate synthase from Bos taurus (Bovine).